Reading from the N-terminus, the 1044-residue chain is Pre-mRNA-splicing factor ATP-dependent RNA helicase DHX16 (1044 aa).

Disordered regions lie at residues 101 to 210 and 374 to 394; these read EDSE…AYEE and LQGNEEPSAPPTSTQAQQKES. A phosphoserine mark is found at serine 103, serine 106, and serine 107. Residues 119 to 130 show a composition bias toward basic residues; that stretch reads QKKRKKRKHLRK. Acidic residues predominate over residues 134-143; the sequence is EEEEEEEEEA. Serine 163 carries the phosphoserine modification. The span at 169-210 shows a compositional bias: basic and acidic residues; sequence RTERERLQDLEERDAFAERVRQRDKDRTRNVLERSDKKAYEE. Residues 412–576 enclose the Helicase ATP-binding domain; sequence LAAIANHQVL…FDDAPVFRIP (165 aa). 425-432 serves as a coordination point for ATP; the sequence is GETGSGKT. Residues 523-526 carry the DEAH box motif; the sequence is DEAH. The 174-residue stretch at 601–774 folds into the Helicase C-terminal domain; it reads SVLQIHVTQP…NVVLLLKSLG (174 aa). A Phosphothreonine modification is found at threonine 715.

It belongs to the DEAD box helicase family. DEAH subfamily. DDX16/PRP8 sub-subfamily. As to quaternary structure, component of pre-catalytic spliceosome complexes. Component of the minor spliceosome, which splices U12-type introns. Interacts with GPKOW. Interacts with TRIM6. Interacts with RIGI.

It is found in the nucleus. It localises to the nucleoplasm. The protein resides in the cytoplasm. It carries out the reaction ATP + H2O = ADP + phosphate + H(+). Functionally, required for pre-mRNA splicing as a component of the spliceosome. Contributes to pre-mRNA splicing after spliceosome formation and prior to the first transesterification reaction. As a component of the minor spliceosome, involved in the splicing of U12-type introns in pre-mRNAs. Also plays a role in innate antiviral response by acting as a pattern recognition receptor sensing splicing signals in viral RNA. Mechanistically, TRIM6 promotes the interaction between unanchored 'Lys-48'-polyubiquitin chains and DHX16, leading to DHX16 interaction with RIGI and ssRNA to amplify RIGI-dependent innate antiviral immune responses. This is Pre-mRNA-splicing factor ATP-dependent RNA helicase DHX16 (DHX16) from Pan troglodytes (Chimpanzee).